Here is a 407-residue protein sequence, read N- to C-terminus: Serine hydroxymethyltransferase (407 aa).

Pyridoxal 5'-phosphate is bound by residues Tyr-51 and 94–95 (GS). (6S)-5,6,7,8-tetrahydrofolate-binding positions include Leu-117 and 121–123 (GHL). 3 residues coordinate pyridoxal 5'-phosphate: Ser-172, His-200, and His-225. Position 226 is an N6-(pyridoxal phosphate)lysine (Lys-226). Glu-242 provides a ligand contact to (6S)-5,6,7,8-tetrahydrofolate. Gly-258 lines the pyridoxal 5'-phosphate pocket.

The protein belongs to the SHMT family. In terms of assembly, homodimer. It depends on pyridoxal 5'-phosphate as a cofactor.

It is found in the cytoplasm. It carries out the reaction (6R)-5,10-methylene-5,6,7,8-tetrahydrofolate + glycine + H2O = (6S)-5,6,7,8-tetrahydrofolate + L-serine. It functions in the pathway one-carbon metabolism; tetrahydrofolate interconversion. The protein operates within amino-acid biosynthesis; glycine biosynthesis; glycine from L-serine: step 1/1. Functionally, catalyzes the reversible interconversion of serine and glycine with tetrahydrofolate (THF) serving as the one-carbon carrier. This reaction serves as the major source of one-carbon groups required for the biosynthesis of purines, thymidylate, methionine, and other important biomolecules. Also exhibits THF-independent aldolase activity toward beta-hydroxyamino acids, producing glycine and aldehydes, via a retro-aldol mechanism. In Thermus thermophilus (strain ATCC 27634 / DSM 579 / HB8), this protein is Serine hydroxymethyltransferase.